Here is a 136-residue protein sequence, read N- to C-terminus: Acyl carrier protein 1, chloroplastic (136 aa).

Residues 1-52 (MASVTGTSISMASFKASLAPSRVSNLRSVSLPIKGKSFAPLRMRSARFVVCC) constitute a chloroplast transit peptide. One can recognise a Carrier domain in the interval 56-131 (PETVEKVCAI…DAADLIEKLI (76 aa)). Ser91 carries the O-(pantetheine 4'-phosphoryl)serine modification.

This sequence belongs to the acyl carrier protein (ACP) family. 4'-phosphopantetheine is transferred from CoA to a specific serine of apo-ACP by acpS. This modification is essential for activity because fatty acids are bound in thioester linkage to the sulfhydryl of the prosthetic group.

It is found in the plastid. The protein resides in the chloroplast. It participates in lipid metabolism; fatty acid biosynthesis. Functionally, carrier of the growing fatty acid chain in fatty acid biosynthesis. This chain is Acyl carrier protein 1, chloroplastic (ACP1), found in Casuarina glauca (Swamp oak).